Consider the following 210-residue polypeptide: MTNLNYQQTHFVMSAPDIRHLPSDTGIEVAFAGRSNAGKSSALNTLTNQKSLARTSKTPGRTQLINLFEVADGKRLVDLPGYGYAEVPEEMKRKWQRALGEYLEKRQSLQGLVVLMDIRHPLKDLDQQMIEWAVDSNIAVLVLLTKTDKLASGARKAQLNMVREAVLAFNGDVQVETFSSLKKQGVDKLRQKLDTWFSEMQPVEETQDGE.

The EngB-type G domain maps to 25–199; sequence TGIEVAFAGR…RQKLDTWFSE (175 aa). Residues 33-40, 60-64, 78-81, 145-148, and 178-180 contribute to the GTP site; these read GRSNAGKS, GRTQL, DLPG, TKTD, and FSS. Residues Ser40 and Thr62 each coordinate Mg(2+).

It belongs to the TRAFAC class TrmE-Era-EngA-EngB-Septin-like GTPase superfamily. EngB GTPase family. Requires Mg(2+) as cofactor.

Necessary for normal cell division and for the maintenance of normal septation. This Escherichia coli O6:K15:H31 (strain 536 / UPEC) protein is Probable GTP-binding protein EngB.